A 548-amino-acid chain; its full sequence is Membrane protein insertase YidC (548 aa).

A helical membrane pass occupies residues 6–26 (NLLIIALLFVSFMIWQAWEQD). A disordered region spans residues 28–52 (NPQPQQQTTQTTTTAAGSAADQGVP). Low complexity predominate over residues 29 to 41 (PQPQQQTTQTTTT). Helical transmembrane passes span 345 to 365 (KFIH…TFIV), 420 to 440 (LGGC…YYML), 458 to 478 (LSAQ…MFFI), and 499 to 519 (PVIF…YYIV).

It belongs to the OXA1/ALB3/YidC family. Type 1 subfamily. Interacts with the Sec translocase complex via SecD. Specifically interacts with transmembrane segments of nascent integral membrane proteins during membrane integration.

The protein localises to the cell inner membrane. Required for the insertion and/or proper folding and/or complex formation of integral membrane proteins into the membrane. Involved in integration of membrane proteins that insert both dependently and independently of the Sec translocase complex, as well as at least some lipoproteins. Aids folding of multispanning membrane proteins. In Klebsiella pneumoniae (strain 342), this protein is Membrane protein insertase YidC.